Reading from the N-terminus, the 257-residue chain is Large ribosomal subunit protein uL2 (257 aa).

The interval 207 to 231 is disordered; it reads VEHPFGGGNHQHIGKPSTIRRDAPA.

It belongs to the universal ribosomal protein uL2 family. Component of the large ribosomal subunit.

The protein localises to the cytoplasm. Its function is as follows. Component of the large ribosomal subunit. The ribosome is a large ribonucleoprotein complex responsible for the synthesis of proteins in the cell. The chain is Large ribosomal subunit protein uL2 (rpl8) from Xenopus laevis (African clawed frog).